The primary structure comprises 920 residues: Isoleucine--tRNA ligase (920 aa).

The 'HIGH' region motif lies at 58–68 (PYANGHLHLGH). An L-isoleucyl-5'-AMP-binding site is contributed by Glu569. The 'KMSKS' region motif lies at 610–614 (KMSKS). An ATP-binding site is contributed by Lys613. Residues Cys895, Cys898, Cys910, and Cys913 each coordinate Zn(2+).

This sequence belongs to the class-I aminoacyl-tRNA synthetase family. IleS type 1 subfamily. Monomer. Requires Zn(2+) as cofactor.

The protein resides in the cytoplasm. The catalysed reaction is tRNA(Ile) + L-isoleucine + ATP = L-isoleucyl-tRNA(Ile) + AMP + diphosphate. In terms of biological role, catalyzes the attachment of isoleucine to tRNA(Ile). As IleRS can inadvertently accommodate and process structurally similar amino acids such as valine, to avoid such errors it has two additional distinct tRNA(Ile)-dependent editing activities. One activity is designated as 'pretransfer' editing and involves the hydrolysis of activated Val-AMP. The other activity is designated 'posttransfer' editing and involves deacylation of mischarged Val-tRNA(Ile). This Helicobacter pylori (strain ATCC 700392 / 26695) (Campylobacter pylori) protein is Isoleucine--tRNA ligase.